Here is a 185-residue protein sequence, read N- to C-terminus: ATP synthase subunit b 2 (185 aa).

The tract at residues 1-23 (MAEGHGDAKGATAHTAADGGHKA) is disordered. The span at 9 to 18 (KGATAHTAAD) shows a compositional bias: low complexity. The chain crosses the membrane as a helical span at residues 37–57 (LVSLTIAFVALYLIVSKIILP).

It belongs to the ATPase B chain family. F-type ATPases have 2 components, F(1) - the catalytic core - and F(0) - the membrane proton channel. F(1) has five subunits: alpha(3), beta(3), gamma(1), delta(1), epsilon(1). F(0) has three main subunits: a(1), b(2) and c(10-14). The alpha and beta chains form an alternating ring which encloses part of the gamma chain. F(1) is attached to F(0) by a central stalk formed by the gamma and epsilon chains, while a peripheral stalk is formed by the delta and b chains.

The protein resides in the cell inner membrane. Functionally, f(1)F(0) ATP synthase produces ATP from ADP in the presence of a proton or sodium gradient. F-type ATPases consist of two structural domains, F(1) containing the extramembraneous catalytic core and F(0) containing the membrane proton channel, linked together by a central stalk and a peripheral stalk. During catalysis, ATP synthesis in the catalytic domain of F(1) is coupled via a rotary mechanism of the central stalk subunits to proton translocation. Its function is as follows. Component of the F(0) channel, it forms part of the peripheral stalk, linking F(1) to F(0). The b'-subunit is a diverged and duplicated form of b found in plants and photosynthetic bacteria. This chain is ATP synthase subunit b 2 (atpF2), found in Rhodopseudomonas palustris (strain BisB5).